The following is a 37-amino-acid chain: Large ribosomal subunit protein bL36c (37 aa).

The protein belongs to the bacterial ribosomal protein bL36 family.

The protein localises to the plastid. Its subcellular location is the chloroplast. This chain is Large ribosomal subunit protein bL36c, found in Phaseolus angularis (Azuki bean).